The primary structure comprises 233 residues: Large ribosomal subunit protein uL1 (233 aa).

This sequence belongs to the universal ribosomal protein uL1 family. As to quaternary structure, part of the 50S ribosomal subunit.

Functionally, binds directly to 23S rRNA. The L1 stalk is quite mobile in the ribosome, and is involved in E site tRNA release. In terms of biological role, protein L1 is also a translational repressor protein, it controls the translation of the L11 operon by binding to its mRNA. The sequence is that of Large ribosomal subunit protein uL1 from Geobacillus kaustophilus (strain HTA426).